An 82-amino-acid polypeptide reads, in one-letter code: Putative antitoxin VapB23 (82 aa).

Putative antitoxin component of a possible type II toxin-antitoxin (TA) system. The cognate toxin is VapC23. In Mycobacterium tuberculosis (strain ATCC 25618 / H37Rv), this protein is Putative antitoxin VapB23 (vapB23).